A 24-amino-acid polypeptide reads, in one-letter code: Humanin-like 9 (24 aa).

It belongs to the humanin family. Highly expressed in the kidney, heart muscle and testis.

Its subcellular location is the secreted. The protein localises to the cytoplasm. In terms of biological role, plays a role as a neuroprotective and antiapoptotic factor. The chain is Humanin-like 9 from Homo sapiens (Human).